A 249-amino-acid polypeptide reads, in one-letter code: MDFLTEVKRTVELRLATEPPPPARSLPLVDFIKSLGEFGIIAEYKRASPRGVIRLDLPPWAYFAQVYQYASAFSVLTEPFWFLGDYRFIPIAKAFKPVLMKDFVIDKRQIEAAYGYGADAVLIIYRLVERERAMELAEYAQRLGLTPVVEIDNVQDAKEVATWGGRLVIGINSRDLKTLETNVQRAFEVAKALRGDVEFIIESGLSRPEEVERACSLYARGVLIGTALMKNPVLVKELRQVAERCIARR.

The protein belongs to the TrpC family.

The catalysed reaction is 1-(2-carboxyphenylamino)-1-deoxy-D-ribulose 5-phosphate + H(+) = (1S,2R)-1-C-(indol-3-yl)glycerol 3-phosphate + CO2 + H2O. The protein operates within amino-acid biosynthesis; L-tryptophan biosynthesis; L-tryptophan from chorismate: step 4/5. In Pyrobaculum aerophilum (strain ATCC 51768 / DSM 7523 / JCM 9630 / CIP 104966 / NBRC 100827 / IM2), this protein is Indole-3-glycerol phosphate synthase.